Here is a 245-residue protein sequence, read N- to C-terminus: DNA repair protein RecO (245 aa).

This sequence belongs to the RecO family.

In terms of biological role, involved in DNA repair and RecF pathway recombination. This is DNA repair protein RecO from Klebsiella pneumoniae subsp. pneumoniae (strain ATCC 700721 / MGH 78578).